Reading from the N-terminus, the 209-residue chain is Large ribosomal subunit protein uL3 (209 aa).

Positions 127–152 (SGGPSSHGSKFHRHLGSTGQAATPSR) are disordered. Positions 143 to 152 (STGQAATPSR) are enriched in polar residues.

It belongs to the universal ribosomal protein uL3 family. Part of the 50S ribosomal subunit. Forms a cluster with proteins L14 and L19.

One of the primary rRNA binding proteins, it binds directly near the 3'-end of the 23S rRNA, where it nucleates assembly of the 50S subunit. The sequence is that of Large ribosomal subunit protein uL3 from Borrelia hermsii (strain HS1 / DAH).